The primary structure comprises 504 residues: ATP synthase subunit alpha (504 aa).

Residue 169 to 176 (GDRQTGKT) participates in ATP binding.

This sequence belongs to the ATPase alpha/beta chains family. In terms of assembly, F-type ATPases have 2 components, CF(1) - the catalytic core - and CF(0) - the membrane proton channel. CF(1) has five subunits: alpha(3), beta(3), gamma(1), delta(1), epsilon(1). CF(0) has three main subunits: a(1), b(2) and c(9-12). The alpha and beta chains form an alternating ring which encloses part of the gamma chain. CF(1) is attached to CF(0) by a central stalk formed by the gamma and epsilon chains, while a peripheral stalk is formed by the delta and b chains.

It is found in the cell membrane. The enzyme catalyses ATP + H2O + 4 H(+)(in) = ADP + phosphate + 5 H(+)(out). Its function is as follows. Produces ATP from ADP in the presence of a proton gradient across the membrane. The alpha chain is a regulatory subunit. The polypeptide is ATP synthase subunit alpha (Clostridium botulinum (strain ATCC 19397 / Type A)).